The chain runs to 211 residues: ATP phosphoribosyltransferase (211 aa).

It belongs to the ATP phosphoribosyltransferase family. Short subfamily. As to quaternary structure, heteromultimer composed of HisG and HisZ subunits.

It is found in the cytoplasm. It carries out the reaction 1-(5-phospho-beta-D-ribosyl)-ATP + diphosphate = 5-phospho-alpha-D-ribose 1-diphosphate + ATP. It functions in the pathway amino-acid biosynthesis; L-histidine biosynthesis; L-histidine from 5-phospho-alpha-D-ribose 1-diphosphate: step 1/9. In terms of biological role, catalyzes the condensation of ATP and 5-phosphoribose 1-diphosphate to form N'-(5'-phosphoribosyl)-ATP (PR-ATP). Has a crucial role in the pathway because the rate of histidine biosynthesis seems to be controlled primarily by regulation of HisG enzymatic activity. This is ATP phosphoribosyltransferase from Bacillus cereus (strain G9842).